The following is a 58-amino-acid chain: uncharacterized protein (58 aa).

The protein localises to the mitochondrion. This is an uncharacterized protein from Saccharomyces cerevisiae (strain ATCC 204508 / S288c) (Baker's yeast).